Here is a 165-residue protein sequence, read N- to C-terminus: ATP synthase subunit b (165 aa).

A helical membrane pass occupies residues 7–27; that stretch reads GTSLGNLLIVTGSFILLLLLV.

Belongs to the ATPase B chain family. As to quaternary structure, F-type ATPases have 2 components, F(1) - the catalytic core - and F(0) - the membrane proton channel. F(1) has five subunits: alpha(3), beta(3), gamma(1), delta(1), epsilon(1). F(0) has three main subunits: a(1), b(2) and c(10-14). The alpha and beta chains form an alternating ring which encloses part of the gamma chain. F(1) is attached to F(0) by a central stalk formed by the gamma and epsilon chains, while a peripheral stalk is formed by the delta and b chains.

It is found in the cell membrane. Functionally, f(1)F(0) ATP synthase produces ATP from ADP in the presence of a proton or sodium gradient. F-type ATPases consist of two structural domains, F(1) containing the extramembraneous catalytic core and F(0) containing the membrane proton channel, linked together by a central stalk and a peripheral stalk. During catalysis, ATP synthesis in the catalytic domain of F(1) is coupled via a rotary mechanism of the central stalk subunits to proton translocation. Component of the F(0) channel, it forms part of the peripheral stalk, linking F(1) to F(0). The sequence is that of ATP synthase subunit b from Streptococcus mutans serotype c (strain ATCC 700610 / UA159).